The sequence spans 631 residues: Dolichyl-diphosphooligosaccharide--protein glycosyltransferase subunit 2 (631 aa).

An N-terminal signal peptide occupies residues 1–22; it reads MAPPGSSTVFLLALTIIASTWA. Over 23-540 the chain is Lumenal; that stretch reads LTPTHYLTKH…REPEKRPPTV (518 aa). The N-linked (GlcNAc...) asparagine glycan is linked to N106. K154 is covalently cross-linked (Glycyl lysine isopeptide (Lys-Gly) (interchain with G-Cter in ubiquitin)). The helical transmembrane segment at 541 to 561 threads the bilayer; sequence VSNTFTALILSPLLLLFALWI. The Cytoplasmic portion of the chain corresponds to 562–571; it reads RIGANVSNFT. A helical membrane pass occupies residues 572–592; that stretch reads FAPSTIIFHLGHAAMLGLMYV. At 593 to 596 the chain is on the lumenal side; that stretch reads YWTQ. Residues 597–617 traverse the membrane as a helical segment; the sequence is LNMFQTLKYLAILGSVTFLAG. Residues 618–631 are Cytoplasmic-facing; the sequence is NRMLAQQAVKRTAH.

Belongs to the SWP1 family. In terms of assembly, component of the oligosaccharyltransferase (OST) complex. OST exists in two different complex forms which contain common core subunits RPN1, RPN2, OST48, OST4, DAD1 and TMEM258, either STT3A or STT3B as catalytic subunits, and form-specific accessory subunits. STT3A complex assembly occurs through the formation of 3 subcomplexes. Subcomplex 1 contains RPN1 and TMEM258, subcomplex 2 contains the STT3A-specific subunits STT3A, DC2/OSTC, and KCP2 as well as the core subunit OST4, and subcomplex 3 contains RPN2, DAD1, and OST48. The STT3A complex can form stable complexes with the Sec61 complex or with both the Sec61 and TRAP complexes. Interacts with DDI2. Interacts with TMEM35A/NACHO. As to expression, expressed in all tissues tested.

It is found in the endoplasmic reticulum. Its subcellular location is the endoplasmic reticulum membrane. It participates in protein modification; protein glycosylation. Its function is as follows. Subunit of the oligosaccharyl transferase (OST) complex that catalyzes the initial transfer of a defined glycan (Glc(3)Man(9)GlcNAc(2) in eukaryotes) from the lipid carrier dolichol-pyrophosphate to an asparagine residue within an Asn-X-Ser/Thr consensus motif in nascent polypeptide chains, the first step in protein N-glycosylation. N-glycosylation occurs cotranslationally and the complex associates with the Sec61 complex at the channel-forming translocon complex that mediates protein translocation across the endoplasmic reticulum (ER). All subunits are required for a maximal enzyme activity. This Homo sapiens (Human) protein is Dolichyl-diphosphooligosaccharide--protein glycosyltransferase subunit 2.